The sequence spans 117 residues: Large ribosomal subunit protein bL20 (117 aa).

The protein belongs to the bacterial ribosomal protein bL20 family.

Functionally, binds directly to 23S ribosomal RNA and is necessary for the in vitro assembly process of the 50S ribosomal subunit. It is not involved in the protein synthesizing functions of that subunit. This chain is Large ribosomal subunit protein bL20, found in Wigglesworthia glossinidia brevipalpis.